Consider the following 604-residue polypeptide: Putative O-acetyltransferase SACOL0978 (604 aa).

The next 11 membrane-spanning stretches (helical) occupy residues 15–35 (YIPGLDGLRAIAVLGIIIYHL), 43–63 (GFLGVDTFFVISGYLITSLLL), 85–105 (LLPAVIVLLMVVGTATLLLKS), 150–170 (AIEEQFYIFFPVILVTLLLTI), 176–196 (IGFIFWGVSIISLGLMMFIYS), 212–232 (LQTLLLGVILAFLWPPFKLKN), 240–260 (YVIDSIGSLSFIVLILLFFII), 267–287 (IYDGGFYLISILTLFIIASVV), 310–330 (YSLYLWHFAVISFVHSYYVDG), 332–352 (IPVYVYFIDISLTIIFAELSY), and 377–397 (FIRMAIVVTLLIPFMLILVGA). Active-site residues include S459, D581, and H584.

Belongs to the acyltransferase 3 family.

It is found in the cell membrane. This chain is Putative O-acetyltransferase SACOL0978, found in Staphylococcus aureus (strain COL).